The primary structure comprises 254 residues: Acidic endochitinase (254 aa).

Residues 1–23 (MKFWGSVLALSFVVFLFLTGTLA) form the signal peptide. Catalysis depends on Glu91, which acts as the Proton donor. Cys213 and Cys245 are joined by a disulfide.

The protein belongs to the glycosyl hydrolase 19 family. Chitinase class II subfamily.

Its subcellular location is the secreted. The catalysed reaction is Random endo-hydrolysis of N-acetyl-beta-D-glucosaminide (1-&gt;4)-beta-linkages in chitin and chitodextrins.. In terms of biological role, defense against chitin-containing fungal pathogens. This is Acidic endochitinase from Petunia hybrida (Petunia).